The primary structure comprises 466 residues: UDP-N-acetylmuramoylalanine--D-glutamate ligase (466 aa).

ATP is bound at residue 128–134; sequence GTNGKST.

This sequence belongs to the MurCDEF family.

Its subcellular location is the cytoplasm. It carries out the reaction UDP-N-acetyl-alpha-D-muramoyl-L-alanine + D-glutamate + ATP = UDP-N-acetyl-alpha-D-muramoyl-L-alanyl-D-glutamate + ADP + phosphate + H(+). It participates in cell wall biogenesis; peptidoglycan biosynthesis. Functionally, cell wall formation. Catalyzes the addition of glutamate to the nucleotide precursor UDP-N-acetylmuramoyl-L-alanine (UMA). The chain is UDP-N-acetylmuramoylalanine--D-glutamate ligase from Bartonella henselae (strain ATCC 49882 / DSM 28221 / CCUG 30454 / Houston 1) (Rochalimaea henselae).